The primary structure comprises 121 residues: Large ribosomal subunit protein uL14 (121 aa).

This sequence belongs to the universal ribosomal protein uL14 family. Part of the 50S ribosomal subunit. Forms a cluster with proteins L3 and L19. In the 70S ribosome, L14 and L19 interact and together make contacts with the 16S rRNA in bridges B5 and B8.

Binds to 23S rRNA. Forms part of two intersubunit bridges in the 70S ribosome. In Prochlorococcus marinus (strain SARG / CCMP1375 / SS120), this protein is Large ribosomal subunit protein uL14.